Reading from the N-terminus, the 269-residue chain is 1,6-dihydroxycyclohexa-2,4-diene-1-carboxylate dehydrogenase (269 aa).

Val11–Leu35 provides a ligand contact to NAD(+). Ser142 provides a ligand contact to substrate. Tyr153 functions as the Proton acceptor in the catalytic mechanism.

This sequence belongs to the short-chain dehydrogenases/reductases (SDR) family. In terms of assembly, homodimer.

It catalyses the reaction (1R,6S)-1,6-dihydroxycyclohexa-2,4-diene-1-carboxylate + NAD(+) = catechol + CO2 + NADH. Its pathway is aromatic compound metabolism; benzoate degradation via hydroxylation; catechol from benzoate: step 2/2. Degradation of 2-hydro-1,2-dihydroxy benzoate (DHB) to catechol. In Pseudomonas putida (Arthrobacter siderocapsulatus), this protein is 1,6-dihydroxycyclohexa-2,4-diene-1-carboxylate dehydrogenase (xylL).